A 351-amino-acid polypeptide reads, in one-letter code: Outer membrane porin PhoE (351 aa).

The N-terminal stretch at 1 to 21 is a signal peptide; the sequence is MKKSTLALVVMGIVASASVQA.

Belongs to the Gram-negative porin family. As to quaternary structure, homotrimer. Forms mixed heterotrimers with OmpC and with OmpF; other mixed heterotrimers are also probable.

It is found in the cell outer membrane. Uptake of inorganic phosphate, phosphorylated compounds, and some other negatively charged solutes. The polypeptide is Outer membrane porin PhoE (phoE) (Escherichia coli (strain K12)).